A 542-amino-acid chain; its full sequence is Major facilitator superfamily domain-containing protein 6-like (542 aa).

Transmembrane regions (helical) follow at residues 46-66 (LGLS…LALL), 89-109 (LLSS…GILV), 198-218 (MFFL…PLEW), 246-266 (VGAA…FCRI), 272-292 (FYSY…LPIY), 321-341 (VTVI…LWLM), 352-372 (GICL…AGPL), 381-401 (WMLV…SFLW), 404-424 (WAVM…WWSV), 444-464 (FEAF…GFVV), and 469-489 (VNVL…ALAV).

It belongs to the major facilitator superfamily. MFSD6 family.

It is found in the membrane. The sequence is that of Major facilitator superfamily domain-containing protein 6-like (mfsd6l) from Danio rerio (Zebrafish).